Here is an 84-residue protein sequence, read N- to C-terminus: MPNIKSAIKRVKTADTRNSRNASQRSAMRTAIKKFDEAAANNADNAKDLYVEASKKLDSAVSKGLIHKNNAARNKSRLAAKLAK.

The disordered stretch occupies residues 1 to 28 (MPNIKSAIKRVKTADTRNSRNASQRSAM).

Belongs to the bacterial ribosomal protein bS20 family.

Functionally, binds directly to 16S ribosomal RNA. This chain is Small ribosomal subunit protein bS20, found in Listeria welshimeri serovar 6b (strain ATCC 35897 / DSM 20650 / CCUG 15529 / CIP 8149 / NCTC 11857 / SLCC 5334 / V8).